A 239-amino-acid polypeptide reads, in one-letter code: Pimeloyl-[acyl-carrier protein] methyl ester esterase (239 aa).

Substrate-binding positions include W20, 77–78 (SM), and 138–142 (FISLQ). S77 functions as the Nucleophile in the catalytic mechanism. Active-site residues include D192 and H220. H220 provides a ligand contact to substrate.

This sequence belongs to the AB hydrolase superfamily. Carboxylesterase BioH family. In terms of assembly, monomer.

It is found in the cytoplasm. The enzyme catalyses 6-carboxyhexanoyl-[ACP] methyl ester + H2O = 6-carboxyhexanoyl-[ACP] + methanol + H(+). The protein operates within cofactor biosynthesis; biotin biosynthesis. The physiological role of BioH is to remove the methyl group introduced by BioC when the pimeloyl moiety is complete. It allows to synthesize pimeloyl-ACP via the fatty acid synthetic pathway through the hydrolysis of the ester bonds of pimeloyl-ACP esters. The protein is Pimeloyl-[acyl-carrier protein] methyl ester esterase of Legionella pneumophila (strain Corby).